A 162-amino-acid polypeptide reads, in one-letter code: Cytochrome c-type biogenesis protein CcmE (162 aa).

Residues 1–8 (MNPVRKKR) lie on the Cytoplasmic side of the membrane. The chain crosses the membrane as a helical; Signal-anchor for type II membrane protein span at residues 9-29 (LIIVLAIVVGVGAAVGLALSA). At 30–162 (LQQNINLFYT…GETSYNQEGK (133 aa)) the chain is on the periplasmic side. 2 residues coordinate heme: His-124 and Tyr-128. Residues 139–148 (DSGQLKHYEN) are compositionally biased toward basic and acidic residues. The tract at residues 139 to 162 (DSGQLKHYENGKAAGETSYNQEGK) is disordered.

The protein belongs to the CcmE/CycJ family.

It is found in the cell inner membrane. Heme chaperone required for the biogenesis of c-type cytochromes. Transiently binds heme delivered by CcmC and transfers the heme to apo-cytochromes in a process facilitated by CcmF and CcmH. The polypeptide is Cytochrome c-type biogenesis protein CcmE (Pseudomonas aeruginosa (strain LESB58)).